The chain runs to 99 residues: Small ribosomal subunit protein uS14 (99 aa).

It belongs to the universal ribosomal protein uS14 family. Part of the 30S ribosomal subunit. Contacts proteins S3 and S10.

Binds 16S rRNA, required for the assembly of 30S particles and may also be responsible for determining the conformation of the 16S rRNA at the A site. The protein is Small ribosomal subunit protein uS14 of Bacteroides fragilis (strain ATCC 25285 / DSM 2151 / CCUG 4856 / JCM 11019 / LMG 10263 / NCTC 9343 / Onslow / VPI 2553 / EN-2).